We begin with the raw amino-acid sequence, 622 residues long: Telomerase-associated protein of 75 kDa (622 aa).

Component of the telomerase holoenzyme complex, composed of the catalytic core (the catalytic subunit TERT, the telomerase RNA template component TER and TAP65/p65), which is associated with two heterotrimeric subcomplexes: (i) the replication protein A (RPA)-related subcomplex, composed of TEB1, RPA2/TEB2 and RPA3/TEB3 and (ii) the CST-like subcomplex, composed of TAP75/p75, TAP45/p45 and TAP19/p19. TEB1 and the CST-like subcomplex are tethered to the catalytic core by TAP50/p50.

The protein localises to the chromosome. It localises to the telomere. Its function is as follows. Component of a CST-like subcomplex of the holoenzyme telomerase ribonucleoprotein complex, which stimulates telomerase complementary-strand synthesis. Telomerase is an essential ribonucleoprotein enzyme that copies new telomeric repeats onto chromosome ends by repetitively synthesizing the short telomere-repeat sequence 5'-TTGGGG-3' using an RNA template component TER. The CST-like subcomplex (also named 7-4-1) binds telomeric single-stranded DNA and coordinates telomere G-strand and C-strand synthesis. The protein is Telomerase-associated protein of 75 kDa of Tetrahymena thermophila (strain SB210).